We begin with the raw amino-acid sequence, 429 residues long: Formate-dependent phosphoribosylglycinamide formyltransferase (429 aa).

N(1)-(5-phospho-beta-D-ribosyl)glycinamide-binding positions include 26–27 and Glu-86; that span reads EL. ATP is bound by residues Arg-118, Lys-159, 199 to 202, and Glu-207; that span reads EEHI. Residues 123–319 form the ATP-grasp domain; it reads ETLVKEAKVP…EFGLHLRAVL (197 aa). Residues Glu-276 and Glu-288 each contribute to the Mg(2+) site. Residues Asp-295, Lys-375, and 382-383 contribute to the N(1)-(5-phospho-beta-D-ribosyl)glycinamide site; that span reads RR.

It belongs to the PurK/PurT family. In terms of assembly, homodimer.

The catalysed reaction is N(1)-(5-phospho-beta-D-ribosyl)glycinamide + formate + ATP = N(2)-formyl-N(1)-(5-phospho-beta-D-ribosyl)glycinamide + ADP + phosphate + H(+). The protein operates within purine metabolism; IMP biosynthesis via de novo pathway; N(2)-formyl-N(1)-(5-phospho-D-ribosyl)glycinamide from N(1)-(5-phospho-D-ribosyl)glycinamide (formate route): step 1/1. Functionally, involved in the de novo purine biosynthesis. Catalyzes the transfer of formate to 5-phospho-ribosyl-glycinamide (GAR), producing 5-phospho-ribosyl-N-formylglycinamide (FGAR). Formate is provided by PurU via hydrolysis of 10-formyl-tetrahydrofolate. In Pyrococcus furiosus (strain ATCC 43587 / DSM 3638 / JCM 8422 / Vc1), this protein is Formate-dependent phosphoribosylglycinamide formyltransferase.